Here is a 252-residue protein sequence, read N- to C-terminus: 2-succinyl-6-hydroxy-2,4-cyclohexadiene-1-carboxylate synthase (252 aa).

It belongs to the AB hydrolase superfamily. MenH family. As to quaternary structure, monomer.

The catalysed reaction is 5-enolpyruvoyl-6-hydroxy-2-succinyl-cyclohex-3-ene-1-carboxylate = (1R,6R)-6-hydroxy-2-succinyl-cyclohexa-2,4-diene-1-carboxylate + pyruvate. It participates in quinol/quinone metabolism; 1,4-dihydroxy-2-naphthoate biosynthesis; 1,4-dihydroxy-2-naphthoate from chorismate: step 3/7. Its pathway is quinol/quinone metabolism; menaquinone biosynthesis. Its function is as follows. Catalyzes a proton abstraction reaction that results in 2,5-elimination of pyruvate from 2-succinyl-5-enolpyruvyl-6-hydroxy-3-cyclohexene-1-carboxylate (SEPHCHC) and the formation of 2-succinyl-6-hydroxy-2,4-cyclohexadiene-1-carboxylate (SHCHC). This chain is 2-succinyl-6-hydroxy-2,4-cyclohexadiene-1-carboxylate synthase, found in Salmonella newport (strain SL254).